The primary structure comprises 466 residues: uncharacterized protein (466 aa).

The segment at 1 to 22 (MKKNNERVNTNPSLISKSYNMK) is disordered. Positions 7–19 (RVNTNPSLISKSY) are enriched in polar residues. Phosphoserine occurs at positions 40 and 42. The 76-residue stretch at 108 to 183 (YFVHMDNISP…RLISATITNH (76 aa)) folds into the RRM domain. Residues 186-207 (RLPNAEHLESSTKTKDESQDKD) are disordered. Positions 188 to 207 (PNAEHLESSTKTKDESQDKD) are enriched in basic and acidic residues. Residues 209 to 368 (LTKLDRAKLE…RAWRNFSGNT (160 aa)) form the CID domain. Ser-371 is modified (phosphoserine). Low complexity predominate over residues 425–436 (STETSSSSSPQP). The disordered stretch occupies residues 425–448 (STETSSSSSPQPTEERKAKFKPSF).

It localises to the nucleus. It is found in the cytoplasm. This is an uncharacterized protein from Schizosaccharomyces pombe (strain 972 / ATCC 24843) (Fission yeast).